The chain runs to 139 residues: Protein FAM237B (139 aa).

The N-terminal stretch at 1-24 (MCFATRRWFYLHLGCMMLINLVNA) is a signal peptide. At Met-112 the chain carries Methionine amide. The propeptide at 113–139 (GRRQVMPPKYNFPQKITGGNLNVYLRE) is removed in the mature form.

In terms of processing, the active form requires C-terminal amidation and disulfide bond formation.

It localises to the secreted. Its function is as follows. May be capable of activating GPR83 via the GNAQ signaling pathway. The polypeptide is Protein FAM237B (Homo sapiens (Human)).